Here is a 77-residue protein sequence, read N- to C-terminus: AKSVHHARVLIRQRHIRVGRQVVNVPSFMVRLDSQKHIDFSLISPFGGGRPGRVKRKNQKAAAKKASGGDGDEEDEE.

Residues 45 to 77 are disordered; sequence PFGGGRPGRVKRKNQKAAAKKASGGDGDEEDEE. Residues 52-63 show a composition bias toward basic residues; that stretch reads GRVKRKNQKAAA.

The protein belongs to the universal ribosomal protein uS4 family.

This chain is Small ribosomal subunit protein uS4 (RPS9), found in Nicotiana tabacum (Common tobacco).